Reading from the N-terminus, the 904-residue chain is Thiamine diphosphate dependent-3-acetyloctanal synthase PigD (904 aa).

The tract at residues 879–904 is disordered; sequence RKAWAAQQPESTSTAFDQDPTQEATS. The span at 886–904 shows a compositional bias: polar residues; it reads QPESTSTAFDQDPTQEATS.

It belongs to the TPP enzyme family. The cofactor is thiamine diphosphate.

It carries out the reaction (2E)-octenal + pyruvate + H(+) = (S)-3-acetyloctanal + CO2. Its pathway is antibiotic biosynthesis; prodigiosin biosynthesis. Functionally, involved in the biosynthesis of 2-methyl-3-n-amyl-pyrrole (MAP), one of the terminal products involved in the biosynthesis of the red antibiotic prodigiosin (Pig). Catalyzes the decarboxylation of pyruvate, followed by the modification of the resulting two-carbon fragment acetaldehyde at the C3 position of the 2-octenal (1,2-addition of acetaldehyde) giving 3-acetyloctanal. In vitro, it can act on a number of alpha,beta-unsaturated carbonyl compounds, including aldehydes and ketones, and can catalyze both 1,2-addition and Stetter-type 1,4-addition depending on the substrate. This Serratia marcescens protein is Thiamine diphosphate dependent-3-acetyloctanal synthase PigD.